A 71-amino-acid chain; its full sequence is Venom peptide 2-long (71 aa).

The N-terminal stretch at 1–24 is a signal peptide; it reads MKQSIIIALFATIAVMACLQMVAA. AXPX repeat units lie at residues 24-27, 32-35, 44-47, 50-53, and 54-57; these read AVPA, AAPG, ASPE, and AEPI. Residues 25–54 constitute a propeptide that is removed on maturation; the sequence is VPAPVPEAAPGPVAEAEAYASPEALASPEA. Leucine amide is present on Leu-68.

The protein belongs to the MCD family. Protonectin subfamily. As to expression, expressed by the venom gland.

The protein localises to the secreted. It localises to the target cell membrane. In terms of biological role, antimicrobial peptide with strong activity against the fungus B.cinerea (MIC=0.5 ug/ml), and poor activities against the fungus C.albicans (MIC=100 ug/ml), the Gram-positive bacterium S.aureus (MIC=125 ug/ml) and the Gram-negative bacterium E.coli (MIC=125 ug/ml). Functionally, antimicrobial peptide with strong activity against the fungus B.cinerea (MIC=0.4 uM), and poor activities against the fungus C.albicans (MIC=16 uM), the Gram-positive bacterium S.aureus (MIC=20 uM) and the Gram-negative bacterium E.coli (MIC=79 uM). Shows cytolytic activity against insect cell lines. Has potent hemolytic activity against ovine erythrocytes. Has potent hemolytic activity against human erythrocytes (EC(50)=31 uM). In vivo, peptide injection in the vicinity of the head and thorax of lepidopteran larvae induces feeding disorder followed by death due to starvation. This Orancistrocerus drewseni (Solitary wasp) protein is Venom peptide 2-long.